The chain runs to 2974 residues: Mediator of RNA polymerase II transcription subunit 13 (2974 aa).

4 stretches are compositionally biased toward basic and acidic residues: residues 284-299 (EKEP…KTPE), 340-367 (MFEP…AREV), 374-390 (RREE…RADD), and 624-633 (SREKRKEYQP). 12 disordered regions span residues 284-309 (EKEP…PQTT), 340-394 (MFEP…NLED), 624-654 (SREK…KRKV), 677-749 (FNAW…FADI), 764-801 (LYNP…PKEE), 1032-1063 (PHGS…QDGE), 1099-1134 (GMLS…YPTP), 1140-1159 (LQAD…FRST), 1281-1342 (TLAR…TPTY), 1416-1486 (QGGL…DATA), 2052-2078 (ELKK…ATPA), and 2247-2309 (QDEA…PAGM). Residues 351–396 (KEETAAEKEKRMAAREVRRLRRQRREERRREMEKQRRADDNLEDYD) adopt a coiled-coil conformation. Basic residues-rich tracts occupy residues 634–654 (YHRK…KRKV) and 677–688 (FNAWKQKKKGPP). Residues 689–717 (PKKDLAKKEAAADKDKDKDKEKDKEKDKD) show a composition bias toward basic and acidic residues. The segment covering 1035-1048 (SFDHDSEPEFDEQR) has biased composition (basic and acidic residues). Polar residues-rich tracts occupy residues 1122–1134 (IESQ…YPTP) and 1140–1149 (LQADASQAHS). Pro residues-rich tracts occupy residues 1284 to 1299 (RPPP…PTPM) and 1326 to 1340 (PAYP…PTTP). A compositionally biased stretch (polar residues) spans 1443-1464 (IRNTDAPNDPTVSKLQSAVSRN). The segment covering 1473 to 1486 (AATSIPTATDDATA) has biased composition (low complexity). Residues 2064–2073 (STQSENSEGN) are compositionally biased toward polar residues. A coiled-coil region spans residues 2220–2301 (AVEGRLKRQK…EQYPAEESQA (82 aa)). 2 stretches are compositionally biased toward basic and acidic residues: residues 2247-2258 (QDEADKREKMDE) and 2281-2292 (EEKKRNKQKENE). Positions 2347–2974 (WKQRDTRVQN…LYHSVARLLV (628 aa)) are mediates transcriptional repression.

This sequence belongs to the Mediator complex subunit 13 family. In terms of assembly, component of the Mediator complex.

The protein localises to the nucleus. Functionally, component of the Mediator complex, a coactivator involved in regulated gene transcription of nearly all RNA polymerase II-dependent genes. Mediator functions as a bridge to convey information from gene-specific regulatory proteins to the basal RNA polymerase II transcription machinery. Mediator is recruited to promoters by direct interactions with regulatory proteins and serves as a scaffold for the assembly of a functional preinitiation complex with RNA polymerase II and the general transcription factors. The chain is Mediator of RNA polymerase II transcription subunit 13 (let-19) from Caenorhabditis briggsae.